Here is a 446-residue protein sequence, read N- to C-terminus: MEKYLSVTTLTKYLKMKFDKDPYLERVYLTGQVSNFRKRPTHQYFSLKDDHAVIQATIWSGIYQKLGFDLEEGMKINVIGRVQVYEPSGSYSIIIEKAEPDGVGALAIQFEQLKKKLTEEGLFQERFKQALPQFSKRIGVVTSRSGAVIRDIITTVSRRFPGVDILLYPTKVQGEGAAEEIARNIARANQRDDLDLLIIGRGGGSIEDLWAFNEEIVVRAIFESRLPVISSVGHETDVTLADFVADRRAATPTAAAELATPVTKLDVLTHLQNQEKRMATAVRNVLSKKQEALKKCSQSVIFRQPERLYDGYLQRLDQLQLRLKQSLRTRISDNKQLVQARTHQLVQLSPVTKIQRYQDRLGQLDKLLDSQMALVYDAKVAEAKRLSEALLMLDTSRIVARGYAIVKKEESVVDSVESLKKKDQVTLLMRDGQVELEVKDVKTKEI.

Belongs to the XseA family. Heterooligomer composed of large and small subunits.

The protein resides in the cytoplasm. The enzyme catalyses Exonucleolytic cleavage in either 5'- to 3'- or 3'- to 5'-direction to yield nucleoside 5'-phosphates.. In terms of biological role, bidirectionally degrades single-stranded DNA into large acid-insoluble oligonucleotides, which are then degraded further into small acid-soluble oligonucleotides. The protein is Exodeoxyribonuclease 7 large subunit of Streptococcus pneumoniae (strain Hungary19A-6).